Consider the following 317-residue polypeptide: Aspartate carbamoyltransferase catalytic subunit (317 aa).

Arg64 and Thr65 together coordinate carbamoyl phosphate. Lys92 is a binding site for L-aspartate. Residues Arg114, His142, and Gln145 each contribute to the carbamoyl phosphate site. L-aspartate contacts are provided by Arg176 and Arg230. Residues Gly271 and Pro272 each coordinate carbamoyl phosphate.

This sequence belongs to the aspartate/ornithine carbamoyltransferase superfamily. ATCase family. Heterododecamer (2C3:3R2) of six catalytic PyrB chains organized as two trimers (C3), and six regulatory PyrI chains organized as three dimers (R2).

The catalysed reaction is carbamoyl phosphate + L-aspartate = N-carbamoyl-L-aspartate + phosphate + H(+). The protein operates within pyrimidine metabolism; UMP biosynthesis via de novo pathway; (S)-dihydroorotate from bicarbonate: step 2/3. In terms of biological role, catalyzes the condensation of carbamoyl phosphate and aspartate to form carbamoyl aspartate and inorganic phosphate, the committed step in the de novo pyrimidine nucleotide biosynthesis pathway. The polypeptide is Aspartate carbamoyltransferase catalytic subunit (Nitratidesulfovibrio vulgaris (strain DP4) (Desulfovibrio vulgaris)).